A 401-amino-acid polypeptide reads, in one-letter code: Elongation factor Tu 2 (401 aa).

Positions 10–209 constitute a tr-type G domain; that stretch reads KPHVNVGTIG…AVDEYIPTPV (200 aa). The segment at 19-26 is G1; that stretch reads GHVDHGKT. 19 to 26 contacts GTP; that stretch reads GHVDHGKT. Threonine 26 serves as a coordination point for Mg(2+). The tract at residues 60-64 is G2; it reads GITIA. The G3 stretch occupies residues 81 to 84; the sequence is DCPG. GTP contacts are provided by residues 81–85 and 136–139; these read DCPGH and NKVD. The G4 stretch occupies residues 136 to 139; the sequence is NKVD. The tract at residues 174–176 is G5; the sequence is SAL.

This sequence belongs to the TRAFAC class translation factor GTPase superfamily. Classic translation factor GTPase family. EF-Tu/EF-1A subfamily. Monomer.

It is found in the cytoplasm. It catalyses the reaction GTP + H2O = GDP + phosphate + H(+). GTP hydrolase that promotes the GTP-dependent binding of aminoacyl-tRNA to the A-site of ribosomes during protein biosynthesis. The protein is Elongation factor Tu 2 of Roseiflexus sp. (strain RS-1).